The following is a 230-amino-acid chain: Cytochrome b6-f complex iron-sulfur subunit, chloroplastic (230 aa).

The segment covering 1–16 (MASTTLSATPTPSQLS) has biased composition (low complexity). The disordered stretch occupies residues 1 to 20 (MASTTLSATPTPSQLSAAKN). A chloroplast-targeting transit peptide spans 1 to 56 (MASTTLSATPTPSQLSAAKNGAYSPSRALLGKTARGLYPEKEMVSRKVTCQATSIP). The chain crosses the membrane as a helical span at residues 73–93 (LLGALSLPTAGMLIPYGAFFV). The Rieske domain maps to 116-212 (AAAWLKTHGP…CDISEEGKVV (97 aa)). [2Fe-2S] cluster-binding residues include cysteine 158, histidine 160, cysteine 176, and histidine 179. Cysteine 163 and cysteine 178 are disulfide-bonded.

The protein belongs to the Rieske iron-sulfur protein family. As to quaternary structure, the 4 large subunits of the cytochrome b6-f complex are cytochrome b6, subunit IV (17 kDa polypeptide, petD), cytochrome f and the Rieske protein, while the 4 small subunits are petG, petL, petM and petN. The complex functions as a dimer. [2Fe-2S] cluster is required as a cofactor.

It is found in the plastid. The protein resides in the chloroplast thylakoid membrane. The catalysed reaction is 2 oxidized [plastocyanin] + a plastoquinol + 2 H(+)(in) = 2 reduced [plastocyanin] + a plastoquinone + 4 H(+)(out). Functionally, component of the cytochrome b6-f complex, which mediates electron transfer between photosystem II (PSII) and photosystem I (PSI), cyclic electron flow around PSI, and state transitions. The sequence is that of Cytochrome b6-f complex iron-sulfur subunit, chloroplastic (petC) from Fritillaria agrestis (Stinkbells).